We begin with the raw amino-acid sequence, 55 residues long: Large ribosomal subunit protein bL33 (55 aa).

The protein belongs to the bacterial ribosomal protein bL33 family.

In Methylocella silvestris (strain DSM 15510 / CIP 108128 / LMG 27833 / NCIMB 13906 / BL2), this protein is Large ribosomal subunit protein bL33.